The primary structure comprises 1848 residues: Unconventional myosin-Vb (1848 aa).

An N-acetylmethionine modification is found at Met1. The Myosin N-terminal SH3-like domain maps to 8–60 (SQCTRVWIPDPDEVWRSAELTKDYKEGDKSLQLRLEDETILEYPIDVQRNQLP). Residues 21-40 (VWRSAELTKDYKEGDKSLQL) are requires for interaction with LIMA1. One can recognise a Myosin motor domain in the interval 69-761 (VGENDLTALS…QVAYLEKLRA (693 aa)). Position 163 to 170 (163 to 170 (GESGAGKT)) interacts with ATP. Residues 596 to 630 (KDPVPATTPGKGSSSKISVRSARPPMKVSNKEHKK) are disordered. The segment at 640 to 662 (LHLLMETLNATTPHYVRCIKPND) is actin-binding. 6 IQ domains span residues 769–798 (IMIQKTVRGWLQKVKYHRLKGATLTLQRYC), 792–821 (LTLQRYCRGHLARRLAEHLRRIRAAVVLQK), 817–848 (VVLQKHYRMQRARQAYQRVRRAAVVIQAFTRA), 840–869 (VVIQAFTRAMFVRRTYRQVLMEHKATTIQK), 865–896 (TTIQKHVRGWMARRHFQRLRDAAIVIQCAFRM), and 888–917 (IVIQCAFRMLKARRELKALRIEARSAEHLK). Coiled coils occupy residues 899–1266 (ARRE…ILRT) and 1341–1471 (RLLE…GMLE). Disordered regions lie at residues 1093–1123 (QTPGHRRNPSNQSSLESDSNYPSISTSEIGD) and 1166–1192 (QLEKREQQDSKKVQAEPPQTDIDLDPN). Residues 1101-1121 (PSNQSSLESDSNYPSISTSEI) show a composition bias toward polar residues. Residues 1166 to 1179 (QLEKREQQDSKKVQ) are compositionally biased toward basic and acidic residues. Ser1446 carries the phosphoserine modification. In terms of domain architecture, Dilute spans 1526–1803 (TSTINGIKKV…IRTIQAQLQE (278 aa)).

It belongs to the TRAFAC class myosin-kinesin ATPase superfamily. Myosin family. Component of the CART complex, at least composed of ACTN4, HGS/HRS, MYO5B and TRIM3. Interacts with RAB11FIP2, RAB11A, and RAB8A. Found in a complex with CFTR and RAB11A. Interacts with NPC1L1;. Interacts with LIMA1.

It is found in the cytoplasm. In terms of biological role, may be involved in vesicular trafficking via its association with the CART complex. The CART complex is necessary for efficient transferrin receptor recycling but not for EGFR degradation. Required in a complex with RAB11A and RAB11FIP2 for the transport of NPC1L1 to the plasma membrane. Together with RAB11A participates in CFTR trafficking to the plasma membrane and TF (transferrin) recycling in nonpolarized cells. Together with RAB11A and RAB8A participates in epithelial cell polarization. Together with RAB25 regulates transcytosis. Required for proper localization of bile salt export pump ABCB11 at the apical/canalicular plasma membrane of hepatocytes. This chain is Unconventional myosin-Vb (MYO5B), found in Homo sapiens (Human).